Here is a 641-residue protein sequence, read N- to C-terminus: Chaperone protein DnaK (641 aa).

T199 bears the Phosphothreonine; by autocatalysis mark. A disordered region spans residues 602 to 641; it reads MYADQADQAQQAGGQEEGQAKSADDAVDAEFEEVKDDDKK. The span at 604-615 shows a compositional bias: low complexity; sequence ADQADQAQQAGG. A compositionally biased stretch (acidic residues) spans 626–641; sequence DAVDAEFEEVKDDDKK.

The protein belongs to the heat shock protein 70 family.

Its function is as follows. Acts as a chaperone. This chain is Chaperone protein DnaK, found in Marinobacter nauticus (strain ATCC 700491 / DSM 11845 / VT8) (Marinobacter aquaeolei).